The chain runs to 170 residues: Shikimate kinase (170 aa).

Position 15–20 (15–20) interacts with ATP; it reads GTGKTT. T19 contributes to the Mg(2+) binding site. Positions 37, 61, and 82 each coordinate substrate. R120 is a binding site for ATP. Residue R138 participates in substrate binding. Residue Q154 coordinates ATP.

It belongs to the shikimate kinase family. In terms of assembly, monomer. It depends on Mg(2+) as a cofactor.

The protein localises to the cytoplasm. It carries out the reaction shikimate + ATP = 3-phosphoshikimate + ADP + H(+). It functions in the pathway metabolic intermediate biosynthesis; chorismate biosynthesis; chorismate from D-erythrose 4-phosphate and phosphoenolpyruvate: step 5/7. In terms of biological role, catalyzes the specific phosphorylation of the 3-hydroxyl group of shikimic acid using ATP as a cosubstrate. The chain is Shikimate kinase from Staphylococcus epidermidis (strain ATCC 35984 / DSM 28319 / BCRC 17069 / CCUG 31568 / BM 3577 / RP62A).